Consider the following 336-residue polypeptide: MEFKLLLVLCFNIGLICSQKTKPIGSKPIAVTTAAKTPATSTSPVTNGTGGPKFDLAALQKLLATFQMMQGAQGGNTAPSSSLPGVSSMPMPSANQISRKSNINANSLYQPELMNTNVPYMGNSLQQSRFQNQFLGGQFAPNVNVYRTNNHISSFEQMRLTRSYNLDEEQKFKILEEHNKFRSDVVQKRGTGAMNVLRWSEKLAAQASLEVMNCSYVNQGRGASLASVYEKYTGSSLVSEFMSRWSDEKNRFSLGENCSIQQTCRYSQAVWANTKQVGCAVQYCGDMSFIACSYSPVGNTVNQIAFSPSRGGICSACTTPPNMPVRCNSDHLCEWY.

The first 18 residues, 1 to 18 (MEFKLLLVLCFNIGLICS), serve as a signal peptide directing secretion. Residue Asn47 is glycosylated (N-linked (GlcNAc...) asparagine). The span at 73–85 (QGGNTAPSSSLPG) shows a compositional bias: polar residues. The disordered stretch occupies residues 73-94 (QGGNTAPSSSLPGVSSMPMPSA). The region spanning 175-292 (LEEHNKFRSD…YCGDMSFIAC (118 aa)) is the SCP domain. Asn213 and Asn257 each carry an N-linked (GlcNAc...) asparagine glycan.

In terms of tissue distribution, component of the acid-insoluble and acid-soluble organic matrix of calcified layers of the shell (at protein level).

The protein resides in the secreted. The polypeptide is SCP domain-containing protein 1 (Lottia gigantea (Giant owl limpet)).